A 104-amino-acid chain; its full sequence is Large ribosomal subunit protein eL30 (104 aa).

Belongs to the eukaryotic ribosomal protein eL30 family.

This is Large ribosomal subunit protein eL30 (RPL30) from Leishmania major.